Consider the following 792-residue polypeptide: Genome polyprotein (792 aa).

Residues 1–15 (MNNQRKKTGNPSFNM) are interaction with host EXOC1. The Cytoplasmic portion of the chain corresponds to 1–101 (MNNQRKKTGN…LNIMNRRRRS (101 aa)). The tract at residues 37–72 (LLSGQGPMKLVMAFVAFLRFLAIPPTAGILKRWGSF) is hydrophobic; homodimerization of capsid protein C. The propeptide at 101-114 (SVTMILMLLPTALA) is ER anchor for the capsid protein C, removed in mature form by serine protease NS3. Residues 102-119 (VTMILMLLPTALAFHLTT) traverse the membrane as a helical segment. Residues 120-242 (RGGEPTLIVS…QIQKVETWAL (123 aa)) are Extracellular-facing. Asn-183 carries N-linked (GlcNAc...) asparagine; by host glycosylation. The chain crosses the membrane as a helical span at residues 243-260 (RHPGFTVIGLFLAHAIGT). Position 261 (Ser-261) is a topological domain, cytoplasmic. Residues 262–280 (ITQKGIIFILLMLVTPSMA) traverse the membrane as a helical segment. The Extracellular segment spans residues 281–725 (MRCVGIGNRD…IHQIFGTAYG (445 aa)). 4 disulfide bridges follow: Cys-283–Cys-310, Cys-340–Cys-401, Cys-354–Cys-385, and Cys-372–Cys-396. Asn-347 carries an N-linked (GlcNAc...) asparagine; by host glycan. A fusion peptide region spans residues 378–391 (DRGWGNGCGLFGKG). Asn-433 is a glycosylation site (N-linked (GlcNAc...) asparagine; by host). 2 disulfide bridges follow: Cys-465–Cys-565 and Cys-582–Cys-613. A helical membrane pass occupies residues 726 to 746 (VLFSGVSWTMKIGIGILLTWL). Residues 747 to 752 (GLNSRS) are Cytoplasmic-facing. A helical membrane pass occupies residues 753 to 775 (TSLSMTCIAVGMVTLYLGVMVQA). Residues 776-792 (DSGCVINWKGKELKCGS) are Extracellular-facing. Residues Cys-779 and Cys-790 are joined by a disulfide bond.

In terms of assembly, homodimer. Interacts (via N-terminus) with host EXOC1 (via C-terminus); this interaction results in EXOC1 degradation through the proteasome degradation pathway. As to quaternary structure, forms heterodimers with envelope protein E in the endoplasmic reticulum and Golgi. Homodimer; in the endoplasmic reticulum and Golgi. Interacts with protein prM. Interacts with non-structural protein 1. In terms of assembly, homodimer; Homohexamer when secreted. Interacts with envelope protein E. Specific enzymatic cleavages in vivo yield mature proteins. Cleavages in the lumen of endoplasmic reticulum are performed by host signal peptidase, wereas cleavages in the cytoplasmic side are performed by serine protease NS3. Signal cleavage at the 2K-4B site requires a prior NS3 protease-mediated cleavage at the 4A-2K site. Post-translationally, N-glycosylated. In terms of processing, N-glycosylated. The excreted form is glycosylated and this is required for efficient secretion of the protein from infected cells.

It localises to the virion. It is found in the host nucleus. The protein localises to the host cytoplasm. The protein resides in the host perinuclear region. Its subcellular location is the secreted. It localises to the virion membrane. It is found in the host endoplasmic reticulum membrane. In terms of biological role, plays a role in virus budding by binding to the cell membrane and gathering the viral RNA into a nucleocapsid that forms the core of a mature virus particle. During virus entry, may induce genome penetration into the host cytoplasm after hemifusion induced by the surface proteins. Can migrate to the cell nucleus where it modulates host functions. Overcomes the anti-viral effects of host EXOC1 by sequestering and degrading the latter through the proteasome degradation pathway. Its function is as follows. Inhibits RNA silencing by interfering with host Dicer. Functionally, prevents premature fusion activity of envelope proteins in trans-Golgi by binding to envelope protein E at pH6.0. After virion release in extracellular space, gets dissociated from E dimers. Acts as a chaperone for envelope protein E during intracellular virion assembly by masking and inactivating envelope protein E fusion peptide. prM is the only viral peptide matured by host furin in the trans-Golgi network probably to avoid catastrophic activation of the viral fusion activity in acidic Golgi compartment prior to virion release. prM-E cleavage is inefficient, and many virions are only partially matured. These uncleaved prM would play a role in immune evasion. In terms of biological role, may play a role in virus budding. Exerts cytotoxic effects by activating a mitochondrial apoptotic pathway through M ectodomain. May display a viroporin activity. Its function is as follows. Binds to host cell surface receptor and mediates fusion between viral and cellular membranes. Envelope protein is synthesized in the endoplasmic reticulum in the form of heterodimer with protein prM. They play a role in virion budding in the ER, and the newly formed immature particle is covered with 60 spikes composed of heterodimer between precursor prM and envelope protein E. The virion is transported to the Golgi apparatus where the low pH causes dissociation of PrM-E heterodimers and formation of E homodimers. prM-E cleavage is inefficient, and many virions are only partially matured. These uncleaved prM would play a role in immune evasion. Functionally, involved in immune evasion, pathogenesis and viral replication. Once cleaved off the polyprotein, is targeted to three destinations: the viral replication cycle, the plasma membrane and the extracellular compartment. Essential for viral replication. Required for formation of the replication complex and recruitment of other non-structural proteins to the ER-derived membrane structures. Excreted as a hexameric lipoparticle that plays a role against host immune response. Antagonizing the complement function. Binds to the host macrophages and dendritic cells. Inhibits signal transduction originating from Toll-like receptor 3 (TLR3). Disrupts the host endothelial glycocalyx layer of host pulmonary microvascular endothelial cells, inducing degradation of sialic acid and shedding of heparan sulfate proteoglycans. NS1 induces expression of sialidases, heparanase, and activates cathepsin L, which activates heparanase via enzymatic cleavage. These effects are probably linked to the endothelial hyperpermeability observed in severe dengue disease. The chain is Genome polyprotein from Aedes aegypti (Yellowfever mosquito).